Consider the following 85-residue polypeptide: MASDLGFSPPEVPEPTFLENLLRYGLFLGAIFQLICVLAIIVPIPKSHEAEAEQAEPRSAEGPKKPKAAIASTNKRPKKETKKKR.

A helical transmembrane segment spans residues 24 to 44 (YGLFLGAIFQLICVLAIIVPI). Residues 49–64 (EAEAEQAEPRSAEGPK) are compositionally biased toward basic and acidic residues. The disordered stretch occupies residues 49-85 (EAEAEQAEPRSAEGPKKPKAAIASTNKRPKKETKKKR). Residues 75 to 85 (KRPKKETKKKR) show a composition bias toward basic residues.

The protein belongs to the UPF0239 family.

It is found in the membrane. The protein is Protein MANBAL (Manbal) of Mus musculus (Mouse).